A 311-amino-acid polypeptide reads, in one-letter code: tRNA-cytidine(32) 2-sulfurtransferase (311 aa).

A PP-loop motif motif is present at residues 47–52 (SGGKDS). [4Fe-4S] cluster is bound by residues Cys122, Cys125, and Cys213.

The protein belongs to the TtcA family. Homodimer. Mg(2+) is required as a cofactor. Requires [4Fe-4S] cluster as cofactor.

It is found in the cytoplasm. It catalyses the reaction cytidine(32) in tRNA + S-sulfanyl-L-cysteinyl-[cysteine desulfurase] + AH2 + ATP = 2-thiocytidine(32) in tRNA + L-cysteinyl-[cysteine desulfurase] + A + AMP + diphosphate + H(+). It participates in tRNA modification. In terms of biological role, catalyzes the ATP-dependent 2-thiolation of cytidine in position 32 of tRNA, to form 2-thiocytidine (s(2)C32). The sulfur atoms are provided by the cysteine/cysteine desulfurase (IscS) system. This chain is tRNA-cytidine(32) 2-sulfurtransferase, found in Escherichia coli (strain 55989 / EAEC).